The sequence spans 437 residues: Elongation factor 1-gamma (437 aa).

Ala2 carries the N-acetylalanine modification. The GST N-terminal domain occupies 2–87; the sequence is AAGTLYTYPE…YVSNEELRGS (86 aa). The GST C-terminal domain maps to 88–216; that stretch reads TPEAAAQVVQ…VKLCEKMAQF (129 aa). N6-acetyllysine is present on residues Lys147 and Lys212. Over residues 221 to 254 the composition is skewed to basic and acidic residues; the sequence is FAESQPKKDTPRKEKGSREEKQKPQAERKEEKKA. A disordered region spans residues 221 to 268; it reads FAESQPKKDTPRKEKGSREEKQKPQAERKEEKKAAAPAPEEEMDECEQ. Residue Lys253 forms a Glycyl lysine isopeptide (Lys-Gly) (interchain with G-Cter in SUMO1) linkage. Residues 276 to 437 enclose the EF-1-gamma C-terminal domain; that stretch reads AKDPFAHLPK…KAFNQGKIFK (162 aa). Lys285 is covalently cross-linked (Glycyl lysine isopeptide (Lys-Gly) (interchain with G-Cter in SUMO2)). The residue at position 401 (Lys401) is an N6-acetyllysine. The residue at position 434 (Lys434) is an N6-acetyllysine; alternate. N6-malonyllysine; alternate is present on Lys434.

EF-1 is composed of four subunits: alpha, beta, delta, and gamma.

Its function is as follows. Probably plays a role in anchoring the complex to other cellular components. The protein is Elongation factor 1-gamma (EEF1G) of Equus caballus (Horse).